The chain runs to 403 residues: UPF0284 protein PMT_1350 (403 aa).

Belongs to the UPF0284 family.

This is UPF0284 protein PMT_1350 from Prochlorococcus marinus (strain MIT 9313).